The following is a 569-amino-acid chain: Protein misato homolog 1 (569 aa).

Phosphoserine is present on residues Ser-41 and Ser-495.

The protein belongs to the misato family.

It is found in the mitochondrion outer membrane. It localises to the cytoplasm. Its function is as follows. Involved in the regulation of mitochondrial distribution and morphology. Required for mitochondrial fusion and mitochondrial network formation. The sequence is that of Protein misato homolog 1 (MSTO1) from Macaca fascicularis (Crab-eating macaque).